A 366-amino-acid polypeptide reads, in one-letter code: Leucine dehydrogenase (366 aa).

Lys-82 is a catalytic residue. NAD(+) is bound at residue 182–188; it reads GVGNVAY.

The protein belongs to the Glu/Leu/Phe/Val dehydrogenases family.

The enzyme catalyses L-leucine + NAD(+) + H2O = 4-methyl-2-oxopentanoate + NH4(+) + NADH + H(+). Its pathway is amino-acid degradation; L-leucine degradation; 4-methyl-2-oxopentanoate from L-leucine (dehydrogenase route): step 1/1. In terms of biological role, catalyzes the reversible deamination of L-leucine to 4-methyl-2-oxopentanoate. In Bacillus cereus, this protein is Leucine dehydrogenase (ldh).